The chain runs to 434 residues: Glutamyl-tRNA reductase (434 aa).

Substrate is bound by residues 49–52, S109, 114–116, and Q120; these read TCNR and EPQ. Residue C50 is the Nucleophile of the active site. Position 189–194 (189–194) interacts with NADP(+); sequence GAGEMA.

This sequence belongs to the glutamyl-tRNA reductase family. In terms of assembly, homodimer.

It carries out the reaction (S)-4-amino-5-oxopentanoate + tRNA(Glu) + NADP(+) = L-glutamyl-tRNA(Glu) + NADPH + H(+). It functions in the pathway porphyrin-containing compound metabolism; protoporphyrin-IX biosynthesis; 5-aminolevulinate from L-glutamyl-tRNA(Glu): step 1/2. Its function is as follows. Catalyzes the NADPH-dependent reduction of glutamyl-tRNA(Glu) to glutamate 1-semialdehyde (GSA). The chain is Glutamyl-tRNA reductase from Desulfatibacillum aliphaticivorans.